A 251-amino-acid polypeptide reads, in one-letter code: Hydroxyacylglutathione hydrolase (251 aa).

Zn(2+) is bound by residues H53, H55, D57, H58, H110, D127, and H165.

The protein belongs to the metallo-beta-lactamase superfamily. Glyoxalase II family. In terms of assembly, monomer. Requires Zn(2+) as cofactor.

The catalysed reaction is an S-(2-hydroxyacyl)glutathione + H2O = a 2-hydroxy carboxylate + glutathione + H(+). Its pathway is secondary metabolite metabolism; methylglyoxal degradation; (R)-lactate from methylglyoxal: step 2/2. In terms of biological role, thiolesterase that catalyzes the hydrolysis of S-D-lactoyl-glutathione to form glutathione and D-lactic acid. The chain is Hydroxyacylglutathione hydrolase from Escherichia coli (strain 55989 / EAEC).